Reading from the N-terminus, the 252-residue chain is Pyrroloquinoline-quinone synthase (252 aa).

The protein belongs to the PqqC family.

The catalysed reaction is 6-(2-amino-2-carboxyethyl)-7,8-dioxo-1,2,3,4,7,8-hexahydroquinoline-2,4-dicarboxylate + 3 O2 = pyrroloquinoline quinone + 2 H2O2 + 2 H2O + H(+). Its pathway is cofactor biosynthesis; pyrroloquinoline quinone biosynthesis. Functionally, ring cyclization and eight-electron oxidation of 3a-(2-amino-2-carboxyethyl)-4,5-dioxo-4,5,6,7,8,9-hexahydroquinoline-7,9-dicarboxylic-acid to PQQ. In Acinetobacter baumannii (strain AB307-0294), this protein is Pyrroloquinoline-quinone synthase.